The primary structure comprises 65 residues: MIKKKSHSGLKKRIKITKKKKLLRGHAYKNHLAASKTTKQNRQLRGVVCVDHSDYKRIKTLIRGL.

It belongs to the bacterial ribosomal protein bL35 family.

The protein is Large ribosomal subunit protein bL35 of Phytoplasma australiense.